The primary structure comprises 29 residues: uncharacterized protein (29 aa).

Its subcellular location is the plastid. It localises to the chloroplast. This is an uncharacterized protein from Trieres chinensis (Marine centric diatom).